A 75-amino-acid chain; its full sequence is Large ribosomal subunit protein bL28 (75 aa).

A disordered region spans residues M1–A21.

The protein belongs to the bacterial ribosomal protein bL28 family.

In Blochmanniella pennsylvanica (strain BPEN), this protein is Large ribosomal subunit protein bL28.